The primary structure comprises 513 residues: 2,3-bisphosphoglycerate-independent phosphoglycerate mutase (513 aa).

The Mn(2+) site is built by Asp-13 and Ser-63. Ser-63 functions as the Phosphoserine intermediate in the catalytic mechanism. Substrate-binding positions include His-124, 154 to 155, Arg-186, Arg-192, 262 to 265, and Lys-335; these read RD and RADR. Mn(2+) contacts are provided by Asp-403, His-407, Asp-444, His-445, and His-463.

Belongs to the BPG-independent phosphoglycerate mutase family. In terms of assembly, monomer. Requires Mn(2+) as cofactor.

It carries out the reaction (2R)-2-phosphoglycerate = (2R)-3-phosphoglycerate. It participates in carbohydrate degradation; glycolysis; pyruvate from D-glyceraldehyde 3-phosphate: step 3/5. In terms of biological role, catalyzes the interconversion of 2-phosphoglycerate and 3-phosphoglycerate. This Myxococcus xanthus (strain DK1622) protein is 2,3-bisphosphoglycerate-independent phosphoglycerate mutase.